Reading from the N-terminus, the 110-residue chain is Snake venom vascular endothelial growth factor toxin ICPP (110 aa).

At Q1 the chain carries Pyrrolidone carboxylic acid. 3 disulfide bridges follow: C14–C56, C45–C91, and C49–C93.

In terms of assembly, homodimer; disulfide-linked. Interacts with high affinity with KDR/VEGFR-2, and with a lower affinity with neuropilin-1 (NRP1) and neuropilin-2 (NRP2). In terms of tissue distribution, expressed by the venom gland.

The protein resides in the secreted. In terms of biological role, snake venom VEGFs may contribute to venom dispersion and prey subjugation by inducing vascular permeability and hypotension. This protein increases vascular permeability and angiogenesis probably through VEGF receptor (KDR/VEGFR-2) signaling. Induces DNA synthesis in human umbilical vein endothelial cells, and promotes mouse embryonic stem cell proliferation and differentiation. It may also induce a drastic hypotensive effect after intravenous injection. The hypotension is mediated by nitric oxide (NO), which is produced by VEGF-activated endothelium NO synthase. This chain is Snake venom vascular endothelial growth factor toxin ICPP, found in Macrovipera lebetinus (Levantine viper).